A 468-amino-acid polypeptide reads, in one-letter code: MPPANGKKGKKGGAAKAVRRIQYRPKSFKHSRFVKHAHFWSAAPEEDFDAILAEMQLADAKTAAKEATKKDAKGGKGKANGSAAATAAPEEAKQAWQAEIAAMKPIDEQFPDGKFPHGIDESPYYLKGKDGRVATDRESNEEKKALDISYEEVWQDYRRSAEAHRQVRKYVKSWIKPGMTMIEICERLETTSRRLIKEQGLEAGLAFPTGCSLNHCAAHYTPNAGDTTVLQYGDVCKIDYGIHVRGRLIDSAFTVHFDPKFDPLVEAVREATNAGIKESGIDVRLCDVGEIVEEVMTSHEVELDGKSYVVKPIRNLNGHSIAQYRIHAGKTVPIVKGGEQTKMEENEIYAIETFGSTGKGYVHDDMETSHYMKNFELADEKIPLRLQKSKGLLNLIDKNFATLAFCRRWIDRLGETKYLMALKDLCDKGIVDPYPPLCDVKGCYTAQWEHTILMRPTVKEVVSRGDDY.

The span at 63 to 74 (AAKEATKKDAKG) shows a compositional bias: basic and acidic residues. Residues 63-87 (AAKEATKKDAKGGKGKANGSAAATA) are disordered. Position 219 (His-219) interacts with substrate. Residues Asp-239, Asp-250, and His-319 each coordinate a divalent metal cation. A substrate-binding site is contributed by His-327. 2 residues coordinate a divalent metal cation: Glu-352 and Glu-449.

This sequence belongs to the peptidase M24A family. Methionine aminopeptidase eukaryotic type 2 subfamily. Requires Co(2+) as cofactor. The cofactor is Zn(2+). Mn(2+) serves as cofactor. It depends on Fe(2+) as a cofactor.

It localises to the cytoplasm. It carries out the reaction Release of N-terminal amino acids, preferentially methionine, from peptides and arylamides.. With respect to regulation, inhibited by the fumagillin analog, TNP-470. In terms of biological role, cotranslationally removes the N-terminal methionine from nascent proteins. The N-terminal methionine is often cleaved when the second residue in the primary sequence is small and uncharged (Met-Ala-, Cys, Gly, Pro, Ser, Thr, or Val). Required for germ cell proliferation and/or differentiation. In Caenorhabditis elegans, this protein is Methionine aminopeptidase 2.